The following is a 214-amino-acid chain: Outer-membrane lipoprotein LolB (214 aa).

Positions Met-1–Gly-25 are cleaved as a signal peptide. Cys-26 carries the N-palmitoyl cysteine lipid modification. Cys-26 carries the S-diacylglycerol cysteine lipid modification.

The protein belongs to the LolB family. Monomer.

It localises to the cell outer membrane. Functionally, plays a critical role in the incorporation of lipoproteins in the outer membrane after they are released by the LolA protein. This chain is Outer-membrane lipoprotein LolB, found in Shewanella sp. (strain MR-7).